Here is a 265-residue protein sequence, read N- to C-terminus: Energy-coupling factor transporter ATP-binding protein EcfA1 (265 aa).

Residues isoleucine 2–aspartate 236 enclose the ABC transporter domain. Glycine 36–serine 43 provides a ligand contact to ATP.

The protein belongs to the ABC transporter superfamily. Energy-coupling factor EcfA family. In terms of assembly, forms a stable energy-coupling factor (ECF) transporter complex composed of 2 membrane-embedded substrate-binding proteins (S component), 2 ATP-binding proteins (A component) and 2 transmembrane proteins (T component).

It localises to the cell membrane. In terms of biological role, ATP-binding (A) component of a common energy-coupling factor (ECF) ABC-transporter complex. Unlike classic ABC transporters this ECF transporter provides the energy necessary to transport a number of different substrates. This chain is Energy-coupling factor transporter ATP-binding protein EcfA1, found in Mycoplasmopsis pulmonis (strain UAB CTIP) (Mycoplasma pulmonis).